Consider the following 531-residue polypeptide: Light-independent protochlorophyllide reductase subunit B (531 aa).

A [4Fe-4S] cluster-binding site is contributed by Asp-36. The Proton donor role is filled by Asp-296. Gly-431–Met-432 provides a ligand contact to substrate.

This sequence belongs to the ChlB/BchB/BchZ family. As to quaternary structure, protochlorophyllide reductase is composed of three subunits; ChlL, ChlN and ChlB. Forms a heterotetramer of two ChlB and two ChlN subunits. [4Fe-4S] cluster is required as a cofactor.

The protein resides in the plastid. It localises to the chloroplast. It catalyses the reaction chlorophyllide a + oxidized 2[4Fe-4S]-[ferredoxin] + 2 ADP + 2 phosphate = protochlorophyllide a + reduced 2[4Fe-4S]-[ferredoxin] + 2 ATP + 2 H2O. The protein operates within porphyrin-containing compound metabolism; chlorophyll biosynthesis (light-independent). Functionally, component of the dark-operative protochlorophyllide reductase (DPOR) that uses Mg-ATP and reduced ferredoxin to reduce ring D of protochlorophyllide (Pchlide) to form chlorophyllide a (Chlide). This reaction is light-independent. The NB-protein (ChlN-ChlB) is the catalytic component of the complex. This is Light-independent protochlorophyllide reductase subunit B from Nephroselmis olivacea (Green alga).